The sequence spans 211 residues: Probable GTP-binding protein EngB (211 aa).

An EngB-type G domain is found at 21 to 205; it reads LMATIVFVGR…KNRIYEIIRE (185 aa). Residues 29–36, 54–58, 71–74, 151–154, and 184–186 contribute to the GTP site; these read GRSNVGKS, GVTRK, DMPG, NKLD, and ISA. The Mg(2+) site is built by Ser-36 and Thr-56.

This sequence belongs to the TRAFAC class TrmE-Era-EngA-EngB-Septin-like GTPase superfamily. EngB GTPase family. The cofactor is Mg(2+).

Functionally, necessary for normal cell division and for the maintenance of normal septation. In Pyrococcus abyssi (strain GE5 / Orsay), this protein is Probable GTP-binding protein EngB.